We begin with the raw amino-acid sequence, 227 residues long: 6,7-dimethyl-8-ribityllumazine synthase, chloroplastic (227 aa).

Residues 1–71 (MKSLASPPCL…LRSSFVQTAA (71 aa)) constitute a chloroplast transit peptide. 5-amino-6-(D-ribitylamino)uracil contacts are provided by residues Phe94, 128–130 (SFE), and 152–154 (AVI). 157-158 (DT) contacts (2S)-2-hydroxy-3-oxobutyl phosphate. The active-site Proton donor is the His160. Phe185 is a 5-amino-6-(D-ribitylamino)uracil binding site. Position 199 (Arg199) interacts with (2S)-2-hydroxy-3-oxobutyl phosphate.

It belongs to the DMRL synthase family. As to quaternary structure, oligomer forming an icosahedral capsid.

It localises to the plastid. Its subcellular location is the chloroplast. The catalysed reaction is (2S)-2-hydroxy-3-oxobutyl phosphate + 5-amino-6-(D-ribitylamino)uracil = 6,7-dimethyl-8-(1-D-ribityl)lumazine + phosphate + 2 H2O + H(+). It participates in cofactor biosynthesis; riboflavin biosynthesis; riboflavin from 2-hydroxy-3-oxobutyl phosphate and 5-amino-6-(D-ribitylamino)uracil: step 1/2. Functionally, catalyzes the formation of 6,7-dimethyl-8-ribityllumazine by condensation of 5-amino-6-(D-ribitylamino)uracil with 3,4-dihydroxy-2-butanone 4-phosphate. This is the penultimate step in the biosynthesis of riboflavin. This chain is 6,7-dimethyl-8-ribityllumazine synthase, chloroplastic, found in Arabidopsis thaliana (Mouse-ear cress).